Consider the following 399-residue polypeptide: Protein phosphatase 2C 37 (399 aa).

A PPM-type phosphatase domain is found at 104 to 389 (KIGTTSVCGR…DNVSVVVVDL (286 aa)). Mn(2+) contacts are provided by Asp142 and Gly143. Zn(2+) is bound by residues Cys146, His148, Cys208, and Cys210. 3 residues coordinate Mn(2+): Asp327, Asp331, and Asp380.

It belongs to the PP2C family. Interacts with AKT2/AKT3. Interacts with ABA-bounded PYR1, PYL1, PYL2, PYL3, PYL4, PYL9 and PYL12, and with free PYL2, PYL3, PYL4 and PYL13. Binds to and inactivates SLAC1 and SRK2E. The inactivation of SRK2E does not require phosphatase activity. Interacts with CBL1, CBL2, CBL3, CBL5, and CBL7, but not CBL4, CBL6, and CBL9. Interacts with RGLG1 and RGLG5. Interacts with KIN10. Requires Mg(2+) as cofactor. The cofactor is Mn(2+). Ubiquitinated by RGLG1 and RGLG5 in response to abscisic acid (ABA). Ubiquitination of PP2CA leads to its degradation by the proteasome. Mostly expressed in seeds and leaves, and, to a lower extent, in roots, stems, and flowers, particularly in siliques. Essentially found in the phloem.

The enzyme catalyses O-phospho-L-seryl-[protein] + H2O = L-seryl-[protein] + phosphate. It carries out the reaction O-phospho-L-threonyl-[protein] + H2O = L-threonyl-[protein] + phosphate. With respect to regulation, repressed by PYR/PYL/RCAR ABA receptors in an ABA-dependent manner. Its function is as follows. Major negative regulator of abscisic acid (ABA) responses during seed germination and cold acclimation. Confers insensitivity to ABA. Modulates negatively the AKT2/3 activity, which mediates K(+) transport and membrane polarization during stress situations, probably by dephosphorylation. Prevents stomata closure by inactivating the S-type anion efflux channel SLAC1 and its activator SRK2E. Represses KIN10 activity by the specific dephosphorylation of its T-loop Thr-198, leading to a poststress inactivation of SnRK1 signaling. The protein is Protein phosphatase 2C 37 (PP2CA) of Arabidopsis thaliana (Mouse-ear cress).